The chain runs to 339 residues: MWWSLIPLSCLLALTSAHDKPSSHPLSDDMINYINKQNTTWQAGRNFYNVDISYLKKLCGTVLGGPNLPERVGFSEDINLPESFDAREQWSNCPTIAQIRDQGSCGSCWAFGAVEAMSDRICIHTNGRVNVEVSAEDLLTCCGIQCGDGCNGGYPSGAWNFWTRKGLVSGGVYNSHIGCLPYTIPPCEHHVNGSRPPCTGEGDTPKCNKMCEAGYSTSYKEDKHYGYTSYSVSDSEKEIMAEIYKNGPVEGAFTVFSDFLTYKSGVYKHEAGDVMGGHAIRILGWGIENGVPYWLVANSWNVDWGDNGFFKILRGENHCGIESEIVAGIPRTQQYWGRF.

Positions 1–17 (MWWSLIPLSCLLALTSA) are cleaved as a signal peptide. The propeptide at 18–79 (HDKPSSHPLS…ERVGFSEDIN (62 aa)) is activation peptide. 6 disulfide bridges follow: cysteine 93-cysteine 122, cysteine 105-cysteine 150, cysteine 141-cysteine 207, cysteine 142-cysteine 146, cysteine 179-cysteine 211, and cysteine 187-cysteine 198. Cysteine 108 is a catalytic residue. Asparagine 192 is a glycosylation site (N-linked (GlcNAc...) asparagine). Residue lysine 220 is modified to N6-acetyllysine. Active-site residues include histidine 278 and asparagine 298. The propeptide occupies 334-339 (QYWGRF).

It belongs to the peptidase C1 family. In terms of assembly, dimer of a heavy chain and a light chain cross-linked by a disulfide bond. Interacts with SRPX2. Directly interacts with SHKBP1. Expressed in the epithelial cells of the prostate and mammary gland.

It localises to the lysosome. Its subcellular location is the melanosome. The protein resides in the secreted. The protein localises to the extracellular space. It is found in the apical cell membrane. The enzyme catalyses Hydrolysis of proteins with broad specificity for peptide bonds. Preferentially cleaves -Arg-Arg-|-Xaa bonds in small molecule substrates (thus differing from cathepsin L). In addition to being an endopeptidase, shows peptidyl-dipeptidase activity, liberating C-terminal dipeptides.. Functionally, thiol protease which is believed to participate in intracellular degradation and turnover of proteins. Cleaves matrix extracellular phosphoglycoprotein MEPE. Involved in the solubilization of cross-linked TG/thyroglobulin in the thyroid follicle lumen. Has also been implicated in tumor invasion and metastasis. This is Cathepsin B (Ctsb) from Rattus norvegicus (Rat).